A 122-amino-acid polypeptide reads, in one-letter code: Large ribosomal subunit protein uL22 (122 aa).

The disordered stretch occupies residues 102–122 (VAEGKEMKSSKSHKKNQAEGK).

This sequence belongs to the universal ribosomal protein uL22 family. Part of the 50S ribosomal subunit.

This protein binds specifically to 23S rRNA; its binding is stimulated by other ribosomal proteins, e.g. L4, L17, and L20. It is important during the early stages of 50S assembly. It makes multiple contacts with different domains of the 23S rRNA in the assembled 50S subunit and ribosome. Functionally, the globular domain of the protein is located near the polypeptide exit tunnel on the outside of the subunit, while an extended beta-hairpin is found that lines the wall of the exit tunnel in the center of the 70S ribosome. The sequence is that of Large ribosomal subunit protein uL22 from Helicobacter pylori (strain HPAG1).